Here is a 679-residue protein sequence, read N- to C-terminus: Methionine--tRNA ligase (679 aa).

The 'HIGH' region motif lies at 12-22 (PYANGAIHLGH). The Zn(2+) site is built by C143, C146, C156, and C159. Positions 328 to 332 (KMSKS) match the 'KMSKS' region motif. Residue K331 participates in ATP binding. Residues 577–679 (DFAKLDLRVA…EGIRPGMQVK (103 aa)) form the tRNA-binding domain.

Belongs to the class-I aminoacyl-tRNA synthetase family. MetG type 1 subfamily. As to quaternary structure, homodimer. Zn(2+) serves as cofactor.

It is found in the cytoplasm. The catalysed reaction is tRNA(Met) + L-methionine + ATP = L-methionyl-tRNA(Met) + AMP + diphosphate. Functionally, is required not only for elongation of protein synthesis but also for the initiation of all mRNA translation through initiator tRNA(fMet) aminoacylation. The polypeptide is Methionine--tRNA ligase (Actinobacillus pleuropneumoniae serotype 5b (strain L20)).